The following is a 252-amino-acid chain: Agamous-like MADS-box protein AGL6 (252 aa).

Residues Arg-3 to Phe-57 enclose the MADS-box domain. In terms of domain architecture, K-box spans Thr-86–Ala-176. Residues Gln-91–Glu-173 are a coiled coil.

In terms of assembly, forms a heterodimer with AGAMOUS. Interacts with AGL15 and AGL16. As to expression, preferentially expressed in flowers.

The protein localises to the nucleus. Its function is as follows. Probable transcription factor. Forms a heterodimer via the K-box domain with AG, that could be involved in genes regulation during floral meristem development. The sequence is that of Agamous-like MADS-box protein AGL6 (AGL6) from Arabidopsis thaliana (Mouse-ear cress).